The following is a 617-amino-acid chain: Autophagy-related protein 20 (617 aa).

Residues 1 to 83 form a disordered region; it reads MWNDEDNNPY…KRKPGGYDSR (83 aa). The span at 20–31 shows a compositional bias: low complexity; it reads QSSSINPTSPST. Over residues 48–58 the composition is skewed to basic and acidic residues; sequence DNEHNHGVIHD. Residues 59–68 show a composition bias toward acidic residues; that stretch reads DSDDDDEDLT. The PX domain occupies 89 to 209; it reads YENPKLSILI…RFFDPNASWS (121 aa). Arginine 126, serine 128, lysine 152, and arginine 175 together coordinate a 1,2-diacyl-sn-glycero-3-phospho-(1D-myo-inositol-3-phosphate). Residues 403 to 440 are a coiled coil; that stretch reads QQDLTTEELSKKRALLDQLEQSEAEARRIENYLSSSQQ. A disordered region spans residues 434 to 516; the sequence is YLSSSQQISP…SGNSITNKIF (83 aa). Basic and acidic residues predominate over residues 454 to 463; that stretch reads PPSHQRRDGS. Positions 480–500 are enriched in polar residues; sequence DFSSHTPSASQGLPERSTSVP.

The protein belongs to the sorting nexin family. As to quaternary structure, forms a complex with SNX4/ATG24 and ATG17.

It is found in the endosome membrane. The protein resides in the preautophagosomal structure membrane. Functionally, required for cytoplasm to vacuole transport (Cvt), pexophagy and mitophagy. Also involved in endoplasmic reticulum-specific autophagic process and is essential for the survival of cells subjected to severe ER stress. Functions in protein retrieval from the endocytic pathway. Required for proper sorting of the v-SNARE protein SNC1. Autophagy is required for proper vegetative growth, asexual/sexual reproduction, and full virulence. Autophagy is particularly involved in the biosynthesis of deoxynivalenol (DON), an important virulence determinant. The protein is Autophagy-related protein 20 of Gibberella zeae (strain ATCC MYA-4620 / CBS 123657 / FGSC 9075 / NRRL 31084 / PH-1) (Wheat head blight fungus).